The primary structure comprises 137 residues: MERTFAIIKPDAVERRLAGTVIDRIEANGFTIVGMKKIKLSKEQAGGFYCVHRERPFFGELCDFMSRSPVIVLCLEKENAIADWRKLMGATNPANAEPGTIRRDFALSLSENSAHGSDAPETAAFEIAYFFNALELV.

Positions 9, 57, 85, 91, 102, and 112 each coordinate ATP. The Pros-phosphohistidine intermediate role is filled by His115.

This sequence belongs to the NDK family. Homotetramer. Mg(2+) is required as a cofactor.

The protein resides in the cytoplasm. The enzyme catalyses a 2'-deoxyribonucleoside 5'-diphosphate + ATP = a 2'-deoxyribonucleoside 5'-triphosphate + ADP. The catalysed reaction is a ribonucleoside 5'-diphosphate + ATP = a ribonucleoside 5'-triphosphate + ADP. Major role in the synthesis of nucleoside triphosphates other than ATP. The ATP gamma phosphate is transferred to the NDP beta phosphate via a ping-pong mechanism, using a phosphorylated active-site intermediate. This Pelobacter propionicus (strain DSM 2379 / NBRC 103807 / OttBd1) protein is Nucleoside diphosphate kinase.